A 319-amino-acid chain; its full sequence is Ubiquinone biosynthesis protein COQ9, mitochondrial (319 aa).

Residues 1–45 constitute a mitochondrion transit peptide; sequence MAATVAFSGVLRRAGWRLLQLRCLPVPRCRPALAPRAFRASAMQL. Positions 17 to 32 match the SIFI-degron motif; the sequence is RLLQLRCLPVPRCRPA. The disordered stretch occupies residues 46–99; the sequence is RSLDQQKDQPPPSSSQQQSEAQGAEEPNPEALRSPPRYTDQGGEEEEDYESEEQ. Residues 87–98 show a composition bias toward acidic residues; sequence GGEEEEDYESEE. Position 176 is an N6-acetyllysine (lysine 176). Position 245 (arginine 245) interacts with a 1,2-diacylglycero-3-phosphoethanolamine.

The protein belongs to the COQ9 family. As to quaternary structure, homodimer. Heterodimer; two heterodimers of COQ7:COQ9 come together on the same side of the lipid pseudo-bilayer and form a curved tetramer with a hydrophobic surface suitable for membrane interaction. These two tetramers assemble into a soluble octamer with a pseudo-bilayer of lipids captured within. Interacts with COQ7; this interaction allows ubiquinone (CoQ) isoprene intermediates presentation to COQ7 and facilitates the COQ7-mediated hydroxylase step. Post-translationally, in response to mitochondrial stress, the precursor protein is ubiquitinated by the SIFI complex in the cytoplasm before mitochondrial import, leading to its degradation. Within the SIFI complex, UBR4 initiates ubiquitin chain that are further elongated or branched by KCMF1.

It localises to the mitochondrion. Its pathway is cofactor biosynthesis; ubiquinone biosynthesis. In terms of biological role, membrane-associated protein that warps the membrane surface to access and bind aromatic isoprenes with high specificity, including ubiquinone (CoQ) isoprene intermediates and presents them directly to COQ7, therefore facilitating the COQ7-mediated hydroxylase step. Participates in the biosynthesis of coenzyme Q, also named ubiquinone, an essential lipid-soluble electron transporter for aerobic cellular respiration. The protein is Ubiquinone biosynthesis protein COQ9, mitochondrial of Bos taurus (Bovine).